The sequence spans 288 residues: Nucleotide-binding protein NE1849 (288 aa).

8–15 (GLSGSGKS) is a binding site for ATP. Residue 57-60 (DMRS) coordinates GTP.

The protein belongs to the RapZ-like family.

Its function is as follows. Displays ATPase and GTPase activities. This chain is Nucleotide-binding protein NE1849, found in Nitrosomonas europaea (strain ATCC 19718 / CIP 103999 / KCTC 2705 / NBRC 14298).